The following is a 104-amino-acid chain: Large ribosomal subunit protein bL21 (104 aa).

This sequence belongs to the bacterial ribosomal protein bL21 family. In terms of assembly, part of the 50S ribosomal subunit. Contacts protein L20.

This protein binds to 23S rRNA in the presence of protein L20. In Caldanaerobacter subterraneus subsp. tengcongensis (strain DSM 15242 / JCM 11007 / NBRC 100824 / MB4) (Thermoanaerobacter tengcongensis), this protein is Large ribosomal subunit protein bL21.